The following is a 576-amino-acid chain: Protein HYPER-SENSITIVITY-RELATED 4 (576 aa).

The helical transmembrane segment at 55–75 (LATAKTVLTTAASVAATAMLA) threads the bilayer. Position 306–313 (306–313 (GPPGTGKS)) interacts with ATP. The disordered stretch occupies residues 508-532 (DKAKTEKQELENKKKTKEGTDSVVK).

The protein belongs to the AAA ATPase family. BCS1 subfamily. As to quaternary structure, binds to the Yariv phenylglycoside (beta-D-Glc)(3). The cofactor is Mg(2+).

Its subcellular location is the membrane. It carries out the reaction ATP + H2O = ADP + phosphate + H(+). The chain is Protein HYPER-SENSITIVITY-RELATED 4 from Arabidopsis thaliana (Mouse-ear cress).